Here is a 155-residue protein sequence, read N- to C-terminus: uncharacterized protein (155 aa).

Positions 28-38 (KKGKDRPREDG) are enriched in basic and acidic residues. Positions 28 to 52 (KKGKDRPREDGTQQQPSESKGEAAC) are disordered.

This is an uncharacterized protein from Dryophytes versicolor (chameleon treefrog).